Consider the following 103-residue polypeptide: Large ribosomal subunit protein eL30 (103 aa).

Belongs to the eukaryotic ribosomal protein eL30 family.

The protein is Large ribosomal subunit protein eL30 of Methanosarcina mazei (strain ATCC BAA-159 / DSM 3647 / Goe1 / Go1 / JCM 11833 / OCM 88) (Methanosarcina frisia).